The primary structure comprises 884 residues: MEENAQARERLPPTVTGLSPTEGVPGTQITIRGENLGNDQSDVIMLFICGIDSLWSMKWKSPSKIIARVGAASRGPGEVRIATKSGGKGSSNVKFRVFITQIGPLEESAVWVDETRTVPGREAIRSVPQIQDERDALGLLPSQKRMDQVLLSRDFPDCSGNLRMENFSPQWYLLENHADATIEDLRIAIKNMELSKQNEAKRSEEMHKANLYSLINCVDTLANLHQALEKGENADHFAALKNISKLIKDSKSKAENVFADVLKRKDDADATRNALGVIVRFKFIFFLSSKIEDSMKKGEYITILNDYTRAKSLYADTDVPLFRELMTEIDEKMQVFKEEMKRKLIDTPVSYEEQSKLIKYLKILDPESDPTWDCITSYYVWLEKSLWDMQTQFLEKAKLEDLENQQRINSQNHLITKTNELQNFVTTLVELLLSKLPSFWKLANTYHNSTASPDAIQRLEDINQMLTNIINVSSWLILNALVPKALPDMVLKQYGDQFAKWPTVPADISRSNLQLSLKTTRSLISSLLENQFSLTHVQPLVELCMTARLKLLSDFVDCGVERVALLAHRINWKQDILDRAQQTKTILPDYYENEICECLTRTRDALSISGYPGEACLFSRERFRDTIIDLFVHLITSIKICFDRLFIRQRPQQLAQEPGQKKGNNEITTKKLLIAVGDIEFIIAKTLNNVGKKMQECGVKHVDQIQEKSRAKLSAFRTKMINDCIAMMSSAFEPLIASATYEYLPDDDDISDYAKEMILCSVLQQAELELYAPQLAIECLQQTVSNALDALLLHFSRLNQDTSPLIVTQIVIDLTGLEEALSTYATLAIRVQINTYRAGLVGRFDNQRLQQCLKNMRTTMRMALQSLEQHAENLGDDSHNTSNI.

A compositionally biased stretch (basic and acidic residues) spans 1–11 (MEENAQARERL). The disordered stretch occupies residues 1–27 (MEENAQARERLPPTVTGLSPTEGVPGT). Residues 13-98 (PTVTGLSPTE…GSSNVKFRVF (86 aa)) enclose the IPT/TIG domain. Coiled coils occupy residues 178 to 206 (ADAT…SEEM) and 846 to 874 (NQRL…AENL).

It belongs to the SEC5 family. In terms of assembly, the exocyst complex is composed of sec-3/exoc1, sec-5/exoc2, sec-6/exoc3, sec-8/exoc4, sec-10/exoc5, sec-15/exoc6, exo-70/exoc7 and exo-84/exoc8.

In terms of biological role, component of the exocyst complex involved in the docking of exocytic vesicles with fusion sites on the plasma membrane. The polypeptide is Exocyst complex component 2 (sec-5) (Caenorhabditis elegans).